Consider the following 255-residue polypeptide: 5-oxoprolinase subunit A (255 aa).

Belongs to the LamB/PxpA family. In terms of assembly, forms a complex composed of PxpA, PxpB and PxpC.

The enzyme catalyses 5-oxo-L-proline + ATP + 2 H2O = L-glutamate + ADP + phosphate + H(+). In terms of biological role, catalyzes the cleavage of 5-oxoproline to form L-glutamate coupled to the hydrolysis of ATP to ADP and inorganic phosphate. This Clostridium beijerinckii (strain ATCC 51743 / NCIMB 8052) (Clostridium acetobutylicum) protein is 5-oxoprolinase subunit A.